A 105-amino-acid chain; its full sequence is Integration host factor subunit alpha (105 aa).

The protein belongs to the bacterial histone-like protein family. Heterodimer of an alpha and a beta chain.

This protein is one of the two subunits of integration host factor, a specific DNA-binding protein that functions in genetic recombination as well as in transcriptional and translational control. In Xanthobacter autotrophicus (strain ATCC BAA-1158 / Py2), this protein is Integration host factor subunit alpha.